Here is an 881-residue protein sequence, read N- to C-terminus: Valine--tRNA ligase (881 aa).

A 'HIGH' region motif is present at residues 49 to 59; sequence PNVTGKLHLGH. The 'KMSKS' region signature appears at 526–530; the sequence is KMSKS. Lys529 contacts ATP. A coiled-coil region spans residues 810–881; sequence LADLINLDEE…VRQRLADLEK (72 aa).

The protein belongs to the class-I aminoacyl-tRNA synthetase family. ValS type 1 subfamily. Monomer.

It is found in the cytoplasm. The enzyme catalyses tRNA(Val) + L-valine + ATP = L-valyl-tRNA(Val) + AMP + diphosphate. In terms of biological role, catalyzes the attachment of valine to tRNA(Val). As ValRS can inadvertently accommodate and process structurally similar amino acids such as threonine, to avoid such errors, it has a 'posttransfer' editing activity that hydrolyzes mischarged Thr-tRNA(Val) in a tRNA-dependent manner. The sequence is that of Valine--tRNA ligase from Bacillus cereus (strain ATCC 10987 / NRS 248).